A 121-amino-acid chain; its full sequence is Large ribosomal subunit protein bL12 (121 aa).

It belongs to the bacterial ribosomal protein bL12 family. As to quaternary structure, homodimer. Part of the ribosomal stalk of the 50S ribosomal subunit. Forms a multimeric L10(L12)X complex, where L10 forms an elongated spine to which 2 to 4 L12 dimers bind in a sequential fashion. Binds GTP-bound translation factors.

Functionally, forms part of the ribosomal stalk which helps the ribosome interact with GTP-bound translation factors. Is thus essential for accurate translation. The sequence is that of Large ribosomal subunit protein bL12 from Shewanella halifaxensis (strain HAW-EB4).